We begin with the raw amino-acid sequence, 105 residues long: Large ribosomal subunit protein bL21 (105 aa).

This sequence belongs to the bacterial ribosomal protein bL21 family. As to quaternary structure, part of the 50S ribosomal subunit. Contacts protein L20.

Functionally, this protein binds to 23S rRNA in the presence of protein L20. The sequence is that of Large ribosomal subunit protein bL21 from Rickettsia peacockii (strain Rustic).